The primary structure comprises 377 residues: tRNA-specific 2-thiouridylase MnmA (377 aa).

Residues 8–15 (GMSGGVDS) and methionine 34 contribute to the ATP site. The interaction with target base in tRNA stretch occupies residues 94 to 96 (NPD). Cysteine 99 acts as the Nucleophile in catalysis. Cysteine 99 and cysteine 201 are oxidised to a cystine. Glycine 123 provides a ligand contact to ATP. Residues 151 to 153 (KDQ) form an interaction with tRNA region. The active-site Cysteine persulfide intermediate is cysteine 201. Residues 315–316 (RY) form an interaction with tRNA region.

It belongs to the MnmA/TRMU family.

It is found in the cytoplasm. The enzyme catalyses S-sulfanyl-L-cysteinyl-[protein] + uridine(34) in tRNA + AH2 + ATP = 2-thiouridine(34) in tRNA + L-cysteinyl-[protein] + A + AMP + diphosphate + H(+). Catalyzes the 2-thiolation of uridine at the wobble position (U34) of tRNA, leading to the formation of s(2)U34. This is tRNA-specific 2-thiouridylase MnmA from Acinetobacter baumannii (strain AB307-0294).